A 60-amino-acid polypeptide reads, in one-letter code: Cecropin-B (60 aa).

The N-terminal stretch at 1–25 is a signal peptide; it reads MNFTKLFILVAIAVLVVVGVQPVDG. Leucine 59 bears the Leucine amide mark.

This sequence belongs to the cecropin family.

The protein resides in the secreted. Functionally, cecropins have lytic and antibacterial activity against several Gram-positive and Gram-negative bacteria. The sequence is that of Cecropin-B (CecB) from Anopheles gambiae (African malaria mosquito).